A 469-amino-acid polypeptide reads, in one-letter code: Bifunctional protein GlmU (469 aa).

A pyrophosphorylase region spans residues 1–236; the sequence is MLNIKLNIVI…ISEINGINDC (236 aa). Residues 11-14, Lys-25, Gln-83, 88-89, 110-112, Gly-147, Glu-161, Asn-176, and Asn-234 each bind UDP-N-acetyl-alpha-D-glucosamine; these read LAAG, GT, and YGD. Asp-112 is a Mg(2+) binding site. Asn-234 is a binding site for Mg(2+). The tract at residues 237–257 is linker; that stretch reads AQLANLERLYQKEQAESLLRI. Positions 258-469 are N-acetyltransferase; it reads GVIIADPNRF…KKKIRYNIIY (212 aa). Arg-340 and Lys-358 together coordinate UDP-N-acetyl-alpha-D-glucosamine. His-370 acts as the Proton acceptor in catalysis. Residues Tyr-373 and Asn-384 each coordinate UDP-N-acetyl-alpha-D-glucosamine. Acetyl-CoA is bound by residues Ala-387, 393-394, Ser-412, Ala-430, and Arg-447; that span reads NY.

The protein in the N-terminal section; belongs to the N-acetylglucosamine-1-phosphate uridyltransferase family. In the C-terminal section; belongs to the transferase hexapeptide repeat family. As to quaternary structure, homotrimer. Requires Mg(2+) as cofactor.

Its subcellular location is the cytoplasm. It catalyses the reaction alpha-D-glucosamine 1-phosphate + acetyl-CoA = N-acetyl-alpha-D-glucosamine 1-phosphate + CoA + H(+). The enzyme catalyses N-acetyl-alpha-D-glucosamine 1-phosphate + UTP + H(+) = UDP-N-acetyl-alpha-D-glucosamine + diphosphate. Its pathway is nucleotide-sugar biosynthesis; UDP-N-acetyl-alpha-D-glucosamine biosynthesis; N-acetyl-alpha-D-glucosamine 1-phosphate from alpha-D-glucosamine 6-phosphate (route II): step 2/2. The protein operates within nucleotide-sugar biosynthesis; UDP-N-acetyl-alpha-D-glucosamine biosynthesis; UDP-N-acetyl-alpha-D-glucosamine from N-acetyl-alpha-D-glucosamine 1-phosphate: step 1/1. It functions in the pathway bacterial outer membrane biogenesis; LPS lipid A biosynthesis. In terms of biological role, catalyzes the last two sequential reactions in the de novo biosynthetic pathway for UDP-N-acetylglucosamine (UDP-GlcNAc). The C-terminal domain catalyzes the transfer of acetyl group from acetyl coenzyme A to glucosamine-1-phosphate (GlcN-1-P) to produce N-acetylglucosamine-1-phosphate (GlcNAc-1-P), which is converted into UDP-GlcNAc by the transfer of uridine 5-monophosphate (from uridine 5-triphosphate), a reaction catalyzed by the N-terminal domain. In Baumannia cicadellinicola subsp. Homalodisca coagulata, this protein is Bifunctional protein GlmU.